The primary structure comprises 428 residues: MGNCYTVGPNEALVVSGGCCGSDGKTYTVGGWAWAWWLITDIQKITLEIMTLQPKCEDVETAEGVAITVTGVAQVKVMTDNELLGYACEQFLGKTVTEIKSVILQTLEGHLRSILGTLTVEQIYQDRDQFAKLVREVAAPDVGRMGIEILSFTIKDVYDKVDYLSSLGKSQTAAVQRDADIGVAEAERDAGIREAECKKEMMDIKFQADTKMADSKRELEMQKAAFNQEVNTKKAEAQLAYELQAAKEQQKIRLEEIEIEVVQRKKQISIEEKEILRTDKELIATVRRPAEAEAFKMEQLAEAKKIKKVLTAQAEAEKIKRIGEAEAGSIEAVGKAEAEKMRLKAEAYQQYGEAAKTALVLEALPKIAGKVAAPLGRTNEIVILSGDGGRVTGEVNRLLAELPVSVNALTGVDLSKIPLLQKMTNPQA.

S-palmitoyl cysteine attachment occurs at residues Cys-4, Cys-19, and Cys-20.

Belongs to the band 7/mec-2 family. Flotillin subfamily. In terms of assembly, heterooligomer; Heterooligomerizes with ic complex of flotillins 1 and 2. Post-translationally, palmitoylation may be required for the formation of higher order complexes and for neurite outgrowth in cultured neural stem cells.

The protein resides in the membrane. Its subcellular location is the endosome. Functionally, may play a role in axon growth and regeneration. May be involved in epidermal cell adhesion and epidermal structure and function. In Danio rerio (Zebrafish), this protein is Flotillin-2a (flot2a).